The following is a 797-amino-acid chain: uncharacterized protein (797 aa).

This is an uncharacterized protein from Treponema pallidum (strain Nichols).